Reading from the N-terminus, the 224-residue chain is Putative N-acetylmannosamine-6-phosphate 2-epimerase (224 aa).

This sequence belongs to the NanE family.

The enzyme catalyses an N-acyl-D-glucosamine 6-phosphate = an N-acyl-D-mannosamine 6-phosphate. The protein operates within amino-sugar metabolism; N-acetylneuraminate degradation; D-fructose 6-phosphate from N-acetylneuraminate: step 3/5. Converts N-acetylmannosamine-6-phosphate (ManNAc-6-P) to N-acetylglucosamine-6-phosphate (GlcNAc-6-P). In Staphylococcus carnosus (strain TM300), this protein is Putative N-acetylmannosamine-6-phosphate 2-epimerase.